A 103-amino-acid polypeptide reads, in one-letter code: Small ribosomal subunit protein bS18 (103 aa).

Residues 1-19 (MSEERTERPERTERPERPQ) are compositionally biased toward basic and acidic residues. Residues 1–33 (MSEERTERPERTERPERPQQRGSGPRKRRPFQR) form a disordered region. The span at 24-33 (GPRKRRPFQR) shows a compositional bias: basic residues.

This sequence belongs to the bacterial ribosomal protein bS18 family. Part of the 30S ribosomal subunit. Forms a tight heterodimer with protein bS6.

Binds as a heterodimer with protein bS6 to the central domain of the 16S rRNA, where it helps stabilize the platform of the 30S subunit. This is Small ribosomal subunit protein bS18 from Geobacter sulfurreducens (strain ATCC 51573 / DSM 12127 / PCA).